A 404-amino-acid chain; its full sequence is MKLPIYLDYSATTPVDPRVAEKMMQFLTLDGTFGNPASRSHRFGWQAEEAVDIARNQISELVGADPREIVFTSGATESDNLAIKGAANFYQKKGKHIITSKTEHKAVLDTCRQLEREGFEVTYLAPQRNGIIDLNELEAAMRDDTILVSIMHVNNEIGVVQDIATIGEMCRARGIIYHVDATQSVGKLPIDLSQLKVDLMSFSGHKIYGPKGIGALYVRRKPRIRIEAQMHGGGHERGMRSGTLPVHQIVGMGEAYRIVKEEMETEMARLRGLRNRLWNGIKDIEEVYLNGDLEQGAPNILNVSFNYVEGESLIMALKDLAVSSGSACTSASLEPSYVLRALGMNDELAHSSIRFSLGRFTTEEEIDYTIDLVRKSIGRLRDLSPLWEMYKQGVDLNSIEWAHH.

Pyridoxal 5'-phosphate-binding positions include Ala-75–Thr-76, Asn-155, Gln-183, and Ser-203–His-205. The residue at position 206 (Lys-206) is an N6-(pyridoxal phosphate)lysine. Thr-243 contributes to the pyridoxal 5'-phosphate binding site. The Cysteine persulfide intermediate role is filled by Cys-328. Cys-328 contacts [2Fe-2S] cluster.

Belongs to the class-V pyridoxal-phosphate-dependent aminotransferase family. NifS/IscS subfamily. In terms of assembly, homodimer. Forms a heterotetramer with IscU, interacts with other sulfur acceptors. Pyridoxal 5'-phosphate is required as a cofactor.

The protein resides in the cytoplasm. It catalyses the reaction (sulfur carrier)-H + L-cysteine = (sulfur carrier)-SH + L-alanine. The protein operates within cofactor biosynthesis; iron-sulfur cluster biosynthesis. Master enzyme that delivers sulfur to a number of partners involved in Fe-S cluster assembly, tRNA modification or cofactor biosynthesis. Catalyzes the removal of elemental sulfur and selenium atoms from cysteine and selenocysteine to produce alanine. Functions as a sulfur delivery protein for Fe-S cluster synthesis onto IscU, an Fe-S scaffold assembly protein, as well as other S acceptor proteins. Also functions as a selenium delivery protein in the pathway for the biosynthesis of selenophosphate. This is Cysteine desulfurase IscS from Salmonella paratyphi C (strain RKS4594).